The chain runs to 207 residues: Cilia- and flagella-associated protein 418 (207 aa).

The segment at 1–75 is required for interaction with FAM161A; it reads MAEDLDELLD…LINEILEEPN (75 aa). The interval 26–52 is disordered; that stretch reads MVEQPKGCGGGTHSSDRNQAKAKETLR. Over residues 39 to 52 the composition is skewed to basic and acidic residues; it reads SSDRNQAKAKETLR.

As to quaternary structure, interacts (via N-terminus) with FAM161A (via central region); the interaction is direct. Widely expressed, with highest levels in heart and brain. Also expressed in the retina (at protein level).

It is found in the cytoplasm. Its subcellular location is the photoreceptor inner segment. Functionally, may be involved in photoreceptor outer segment disk morphogenesis. This Homo sapiens (Human) protein is Cilia- and flagella-associated protein 418.